A 481-amino-acid polypeptide reads, in one-letter code: Dual specificity protein kinase CLK4 (481 aa).

Disordered stretches follow at residues 1–47 (MRHS…KPHH) and 102–143 (SKSS…EDDE). Over residues 8 to 19 (HCPDWDSRESWG) the composition is skewed to basic and acidic residues. Composition is skewed to basic residues over residues 106–119 (VRSR…KRNR) and 126–136 (SHSKSHRRKRS). Ser136 and Ser138 each carry phosphoserine. The 317-residue stretch at 159 to 475 (YEIVDTLGEG…LDEALQHPFF (317 aa)) folds into the Protein kinase domain. ATP is bound by residues 165-173 (LGEGAFGKV) and Lys189. The active-site Proton acceptor is Asp286.

It belongs to the protein kinase superfamily. CMGC Ser/Thr protein kinase family. Lammer subfamily. In terms of assembly, interacts with UBL5. Autophosphorylates on all three types of residues. In terms of tissue distribution, expressed in the hippocampus, the cerebellum and the olfactory bulb.

It is found in the nucleus. It carries out the reaction L-seryl-[protein] + ATP = O-phospho-L-seryl-[protein] + ADP + H(+). The catalysed reaction is L-threonyl-[protein] + ATP = O-phospho-L-threonyl-[protein] + ADP + H(+). It catalyses the reaction L-tyrosyl-[protein] + ATP = O-phospho-L-tyrosyl-[protein] + ADP + H(+). TG003 inhibits its kinase activity and affects the regulation of alternative splicing mediated by phosphorylation of SR proteins. Its function is as follows. Dual specificity kinase acting on both serine/threonine and tyrosine-containing substrates. Phosphorylates serine- and arginine-rich (SR) proteins of the spliceosomal complex and may be a constituent of a network of regulatory mechanisms that enable SR proteins to control RNA splicing. Phosphorylates SRSF1 and SRSF3. Required for the regulation of alternative splicing of MAPT/TAU. Regulates the alternative splicing of tissue factor (F3) pre-mRNA in endothelial cells. In Mus musculus (Mouse), this protein is Dual specificity protein kinase CLK4 (Clk4).